Reading from the N-terminus, the 354-residue chain is Sulfate/thiosulfate import ATP-binding protein CysA 2 (354 aa).

Positions 3-237 constitute an ABC transporter domain; sequence IHIQQVNKHF…PSNPFVYEFL (235 aa). Position 35-42 (35-42) interacts with ATP; that stretch reads GPSGSGKT.

The protein belongs to the ABC transporter superfamily. Sulfate/tungstate importer (TC 3.A.1.6) family. The complex is composed of two ATP-binding proteins (CysA), two transmembrane proteins (CysT and CysW) and a solute-binding protein (CysP).

It localises to the cell inner membrane. It catalyses the reaction sulfate(out) + ATP + H2O = sulfate(in) + ADP + phosphate + H(+). The catalysed reaction is thiosulfate(out) + ATP + H2O = thiosulfate(in) + ADP + phosphate + H(+). Its function is as follows. Part of the ABC transporter complex CysAWTP involved in sulfate/thiosulfate import. Responsible for energy coupling to the transport system. The polypeptide is Sulfate/thiosulfate import ATP-binding protein CysA 2 (Shewanella oneidensis (strain ATCC 700550 / JCM 31522 / CIP 106686 / LMG 19005 / NCIMB 14063 / MR-1)).